Consider the following 305-residue polypeptide: ATP synthase subunit gamma, mitochondrial (305 aa).

Belongs to the ATPase gamma chain family. In terms of assembly, F-type ATPases have 2 components, F(1) - the catalytic core - and F(o) - the membrane proton channel. F(1) has five subunits: alpha(3), beta(3), gamma(1), delta(1), epsilon(1), plus the additional subunit P18 (Tb427.05.1710) that is not present in F(1)F(o) ATP synthase from metazoa. Subunit P18 (Tb927.5.1710) interacts with the alpha subunit with a 1:1 stoichiometry; the interaction is direct. Subunit gamma is part of the central stalk. F(o) has three main subunits: a, b and c. The trypanosomal ATPase complex contains additional subunits that are not present in the F(1)F(o) ATP synthase from metazoa.

It localises to the mitochondrion. The protein resides in the mitochondrion inner membrane. Mitochondrial membrane ATP synthase (F(1)F(o) ATP synthase) produces ATP from ADP in the presence of a proton gradient across the membrane which is generated by electron transport complexes of the respiratory chain. F-type ATPases consist of two structural domains, F(1) - containing the extramembraneous catalytic core, and F(o) - containing the membrane proton channel, linked together by a central stalk and a peripheral stalk. During catalysis, ATP synthesis in the catalytic domain of F(1) is coupled via a rotary mechanism of the central stalk subunits to proton translocation. Subunits alpha and beta form the catalytic core in F(1). Rotation of the central stalk against the surrounding alpha(3)beta(3) subunits leads to hydrolysis of ATP in three separate catalytic sites on the beta subunits. Contrary to the procyclic, insect form that requires F(1)F(o) ATP synthase for ATP synthesis, the bloodstream form relies on ATP hydrolysis by F(1)F(o) ATP synthase to maintain its mitochondrial membrane potential. The protein is ATP synthase subunit gamma, mitochondrial of Trypanosoma brucei brucei.